A 225-amino-acid polypeptide reads, in one-letter code: Phosphatidylserine decarboxylase proenzyme (225 aa).

Ser-189 functions as the Schiff-base intermediate with substrate; via pyruvic acid in the catalytic mechanism. A Pyruvic acid (Ser); by autocatalysis modification is found at Ser-189.

This sequence belongs to the phosphatidylserine decarboxylase family. PSD-A subfamily. In terms of assembly, heterodimer of a large membrane-associated beta subunit and a small pyruvoyl-containing alpha subunit. The cofactor is pyruvate. Post-translationally, is synthesized initially as an inactive proenzyme. Formation of the active enzyme involves a self-maturation process in which the active site pyruvoyl group is generated from an internal serine residue via an autocatalytic post-translational modification. Two non-identical subunits are generated from the proenzyme in this reaction, and the pyruvate is formed at the N-terminus of the alpha chain, which is derived from the carboxyl end of the proenzyme. The post-translation cleavage follows an unusual pathway, termed non-hydrolytic serinolysis, in which the side chain hydroxyl group of the serine supplies its oxygen atom to form the C-terminus of the beta chain, while the remainder of the serine residue undergoes an oxidative deamination to produce ammonia and the pyruvoyl prosthetic group on the alpha chain.

It localises to the cell membrane. The enzyme catalyses a 1,2-diacyl-sn-glycero-3-phospho-L-serine + H(+) = a 1,2-diacyl-sn-glycero-3-phosphoethanolamine + CO2. Its pathway is phospholipid metabolism; phosphatidylethanolamine biosynthesis; phosphatidylethanolamine from CDP-diacylglycerol: step 2/2. Its function is as follows. Catalyzes the formation of phosphatidylethanolamine (PtdEtn) from phosphatidylserine (PtdSer). The chain is Phosphatidylserine decarboxylase proenzyme from Amoebophilus asiaticus (strain 5a2).